A 103-amino-acid chain; its full sequence is UPF0145 protein CYA_2258 (103 aa).

Belongs to the UPF0145 family.

In Synechococcus sp. (strain JA-3-3Ab) (Cyanobacteria bacterium Yellowstone A-Prime), this protein is UPF0145 protein CYA_2258.